A 52-amino-acid chain; its full sequence is Insulin (52 aa).

Intrachain disulfides connect Cys-7–Cys-38, Cys-19–Cys-51, and Cys-37–Cys-42.

This sequence belongs to the insulin family. In terms of assembly, heterodimer of a B chain and an A chain linked by two disulfide bonds.

It localises to the secreted. Its function is as follows. Insulin decreases blood glucose concentration. It increases cell permeability to monosaccharides, amino acids and fatty acids. It accelerates glycolysis, the pentose phosphate cycle, and glycogen synthesis in liver. The chain is Insulin (ins) from Acipenser gueldenstaedtii (Russian sturgeon).